A 220-amino-acid chain; its full sequence is Ribonuclease HII (220 aa).

The region spanning K32 to C220 is the RNase H type-2 domain. The a divalent metal cation site is built by D38, E39, and D130.

The protein belongs to the RNase HII family. Mn(2+) is required as a cofactor. Mg(2+) serves as cofactor.

It localises to the cytoplasm. It catalyses the reaction Endonucleolytic cleavage to 5'-phosphomonoester.. Its function is as follows. Endonuclease that specifically degrades the RNA of RNA-DNA hybrids. The sequence is that of Ribonuclease HII from Brucella suis (strain ATCC 23445 / NCTC 10510).